Consider the following 410-residue polypeptide: MARAKFERTKPHVNIGTIGHVDHGKTTLTAAITMALAAQGKAKARKYADIDAAPEEKARGITINTAHVEYETDDRHYAHVDCPGHADYVKNMITGAAQMDGGILVVSAADGPMPQTREHILLAKQVGVPNLVVFLNKEDMVDDEELLELVELEVRELLSEYEFPGDDIPIVKGSALKAVEALTDTPTIKKGDNDWVDKILALMDEVDAYIPTPERDIDKPFLMAIEDVFSISGRGTVATGRIERGKIKAGETVEIVGIKEKTKSTTVTGVEMFQKTLEEGLAGDNVGLLLRGVQKEEIERGMVIAKPGSIKPHTQFEGEVYVLTKEEGGRHTPFFKNYRPQFYVRTTDVTGTIVDYTADDGSAVEMVMPGDRIKMTVELINPIAIEQGMRFAIREGGRTIGAGVVSKIIQ.

The region spanning 10-214 is the tr-type G domain; sequence KPHVNIGTIG…EVDAYIPTPE (205 aa). Residues 19–26 form a G1 region; sequence GHVDHGKT. Position 19-26 (19-26) interacts with GTP; that stretch reads GHVDHGKT. T26 provides a ligand contact to Mg(2+). Residues 60-64 are G2; sequence GITIN. A G3 region spans residues 81-84; that stretch reads DCPG. GTP is bound by residues 81 to 85 and 136 to 139; these read DCPGH and NKED. The G4 stretch occupies residues 136–139; it reads NKED. The G5 stretch occupies residues 174 to 176; the sequence is SAL.

It belongs to the TRAFAC class translation factor GTPase superfamily. Classic translation factor GTPase family. EF-Tu/EF-1A subfamily. Monomer.

It localises to the cytoplasm. The catalysed reaction is GTP + H2O = GDP + phosphate + H(+). In terms of biological role, GTP hydrolase that promotes the GTP-dependent binding of aminoacyl-tRNA to the A-site of ribosomes during protein biosynthesis. This is Elongation factor Tu from Gloeothece citriformis (strain PCC 7424) (Cyanothece sp. (strain PCC 7424)).